A 476-amino-acid chain; its full sequence is MKTYLVRYSEIGLKGDRERARMERILADNIINYYKKIGYEARCQLLAGRLLVEAENDIPLSKVFGIKSYSECIRIKFENQEDIVKKVHALYEEKVKGKTFGVRCRRTGTHSFTSIDMEKAIGDALYSISNGVDLKSPEVWIHVDIVGKDALIYDKIYKGPGGLPLGSEGKLISMVSGGIDSPVATWLMMKRGSPCDIFFCSLADPIDTQAFLEIAKKLVERWSPYRDGNVFIADCRDLIRDMVIEKKTNFNNVTFKKVLYRLAERLAEKYRYLGIVTGESLGQVSSQTAENLLSIEHGINFPIYRPLIGLDKDEITAIARDIGTFPEKNVGEFCSLFSAHPVTRSKWEDIEEDVKKIDIEKFIERVTAIKFSEIGKIVINSDLMLNKNLEDAVFIDLRKKDLYEKSHYQGARHLDLEQALAINDTSKKYVFYCSMGLQSAYVASVLRERGIEAYFTTFSKLSKQKGSVDETIGKRV.

Residues 54 to 156 (AENDIPLSKV…GKDALIYDKI (103 aa)) enclose the THUMP domain. ATP contacts are provided by residues 174–175 (MV), Lys256, Gly278, and Gln287. Cys334 and Cys433 are disulfide-bonded. The 83-residue stretch at 388-470 (NLEDAVFIDL…LSKQKGSVDE (83 aa)) folds into the Rhodanese domain. Cys433 functions as the Cysteine persulfide intermediate in the catalytic mechanism.

Belongs to the ThiI family.

The protein localises to the cytoplasm. The catalysed reaction is [ThiI sulfur-carrier protein]-S-sulfanyl-L-cysteine + a uridine in tRNA + 2 reduced [2Fe-2S]-[ferredoxin] + ATP + H(+) = [ThiI sulfur-carrier protein]-L-cysteine + a 4-thiouridine in tRNA + 2 oxidized [2Fe-2S]-[ferredoxin] + AMP + diphosphate. It catalyses the reaction [ThiS sulfur-carrier protein]-C-terminal Gly-Gly-AMP + S-sulfanyl-L-cysteinyl-[cysteine desulfurase] + AH2 = [ThiS sulfur-carrier protein]-C-terminal-Gly-aminoethanethioate + L-cysteinyl-[cysteine desulfurase] + A + AMP + 2 H(+). Its pathway is cofactor biosynthesis; thiamine diphosphate biosynthesis. Its function is as follows. Catalyzes the ATP-dependent transfer of a sulfur to tRNA to produce 4-thiouridine in position 8 of tRNAs, which functions as a near-UV photosensor. Also catalyzes the transfer of sulfur to the sulfur carrier protein ThiS, forming ThiS-thiocarboxylate. This is a step in the synthesis of thiazole, in the thiamine biosynthesis pathway. The sulfur is donated as persulfide by IscS. The protein is tRNA sulfurtransferase of Thermoplasma volcanium (strain ATCC 51530 / DSM 4299 / JCM 9571 / NBRC 15438 / GSS1).